Reading from the N-terminus, the 365-residue chain is Spermidine/putrescine import ATP-binding protein PotA (365 aa).

Residues 9–239 (IRLTNVTKSY…PINHFVANFI (231 aa)) enclose the ABC transporter domain. 41–48 (GPSGCGKT) is an ATP binding site.

Belongs to the ABC transporter superfamily. Spermidine/putrescine importer (TC 3.A.1.11.1) family. In terms of assembly, the complex is composed of two ATP-binding proteins (PotA), two transmembrane proteins (PotB and PotC) and a solute-binding protein (PotD).

Its subcellular location is the cell membrane. It carries out the reaction ATP + H2O + polyamine-[polyamine-binding protein]Side 1 = ADP + phosphate + polyamineSide 2 + [polyamine-binding protein]Side 1.. Part of the ABC transporter complex PotABCD involved in spermidine/putrescine import. Responsible for energy coupling to the transport system. In Lactiplantibacillus plantarum (strain ATCC BAA-793 / NCIMB 8826 / WCFS1) (Lactobacillus plantarum), this protein is Spermidine/putrescine import ATP-binding protein PotA.